The chain runs to 138 residues: Large ribosomal subunit protein uL16 (138 aa).

Residues 1–19 are compositionally biased toward basic residues; that stretch reads MLIPRKVKHRKQHHPKKKG. Residues 1–24 form a disordered region; the sequence is MLIPRKVKHRKQHHPKKKGTASGG.

It belongs to the universal ribosomal protein uL16 family. Part of the 50S ribosomal subunit.

Its function is as follows. Binds 23S rRNA and is also seen to make contacts with the A and possibly P site tRNAs. The protein is Large ribosomal subunit protein uL16 of Mycobacteroides abscessus (strain ATCC 19977 / DSM 44196 / CCUG 20993 / CIP 104536 / JCM 13569 / NCTC 13031 / TMC 1543 / L948) (Mycobacterium abscessus).